The primary structure comprises 82 residues: UPF0298 protein SPCG_0698 (82 aa).

It belongs to the UPF0298 family.

Its subcellular location is the cytoplasm. The chain is UPF0298 protein SPCG_0698 from Streptococcus pneumoniae (strain CGSP14).